We begin with the raw amino-acid sequence, 286 residues long: Bifunctional protein FolD (286 aa).

NADP(+)-binding positions include 167–169 and Ile233; that span reads GRS.

Belongs to the tetrahydrofolate dehydrogenase/cyclohydrolase family. Homodimer.

The enzyme catalyses (6R)-5,10-methylene-5,6,7,8-tetrahydrofolate + NADP(+) = (6R)-5,10-methenyltetrahydrofolate + NADPH. It catalyses the reaction (6R)-5,10-methenyltetrahydrofolate + H2O = (6R)-10-formyltetrahydrofolate + H(+). It functions in the pathway one-carbon metabolism; tetrahydrofolate interconversion. Its function is as follows. Catalyzes the oxidation of 5,10-methylenetetrahydrofolate to 5,10-methenyltetrahydrofolate and then the hydrolysis of 5,10-methenyltetrahydrofolate to 10-formyltetrahydrofolate. This Limosilactobacillus reuteri (strain DSM 20016) (Lactobacillus reuteri) protein is Bifunctional protein FolD.